The chain runs to 214 residues: Proteasome subunit beta type-6 (214 aa).

The propeptide at 1-14 (MEAPEWLDNAVDLG) is removed in mature form. The active-site Nucleophile is threonine 15.

The protein belongs to the peptidase T1B family. As to quaternary structure, the 26S proteasome consists of a 20S proteasome core and two 19S regulatory subunits. The 20S proteasome core is composed of 28 subunits that are arranged in four stacked rings, resulting in a barrel-shaped structure. The two end rings are each formed by seven alpha subunits, and the two central rings are each formed by seven beta subunits. The catalytic chamber with the active sites is on the inside of the barrel.

It is found in the cytoplasm. The protein localises to the nucleus. The catalysed reaction is Cleavage of peptide bonds with very broad specificity.. The proteasome is a multicatalytic proteinase complex which is characterized by its ability to cleave peptides with Arg, Phe, Tyr, Leu, and Glu adjacent to the leaving group at neutral or slightly basic pH. The proteasome has an ATP-dependent proteolytic activity. This Dictyostelium discoideum (Social amoeba) protein is Proteasome subunit beta type-6 (psmB6).